Here is a 238-residue protein sequence, read N- to C-terminus: Ubiquinone biosynthesis O-methyltransferase (238 aa).

Positions 39, 58, 79, and 123 each coordinate S-adenosyl-L-methionine.

This sequence belongs to the methyltransferase superfamily. UbiG/COQ3 family.

It catalyses the reaction a 3-demethylubiquinol + S-adenosyl-L-methionine = a ubiquinol + S-adenosyl-L-homocysteine + H(+). The enzyme catalyses a 3-(all-trans-polyprenyl)benzene-1,2-diol + S-adenosyl-L-methionine = a 2-methoxy-6-(all-trans-polyprenyl)phenol + S-adenosyl-L-homocysteine + H(+). It functions in the pathway cofactor biosynthesis; ubiquinone biosynthesis. In terms of biological role, O-methyltransferase that catalyzes the 2 O-methylation steps in the ubiquinone biosynthetic pathway. This chain is Ubiquinone biosynthesis O-methyltransferase, found in Hahella chejuensis (strain KCTC 2396).